The following is a 211-amino-acid chain: Urease accessory protein UreG (211 aa).

GTP is bound at residue Gly-12 to Thr-19.

The protein belongs to the SIMIBI class G3E GTPase family. UreG subfamily. Homodimer. UreD, UreF and UreG form a complex that acts as a GTP-hydrolysis-dependent molecular chaperone, activating the urease apoprotein by helping to assemble the nickel containing metallocenter of UreC. The UreE protein probably delivers the nickel.

Its subcellular location is the cytoplasm. Functionally, facilitates the functional incorporation of the urease nickel metallocenter. This process requires GTP hydrolysis, probably effectuated by UreG. This Paracoccus denitrificans (strain Pd 1222) protein is Urease accessory protein UreG.